The sequence spans 255 residues: L-erythrulose-1-phosphate isomerase (255 aa).

Histidine 98 functions as the Electrophile in the catalytic mechanism. Catalysis depends on glutamate 171, which acts as the Proton acceptor. 2 residues coordinate substrate: glycine 177 and serine 214.

This sequence belongs to the triosephosphate isomerase family. In terms of assembly, homodimer.

The protein localises to the cytoplasm. The catalysed reaction is L-erythrulose 1-phosphate = D-erythrulose 4-phosphate. The protein operates within carbohydrate metabolism; erythritol degradation. Functionally, catalyzes the isomerization of D-erythrulose-4P to L-erythrulose-1P. This is L-erythrulose-1-phosphate isomerase from Rhizobium meliloti (strain 1021) (Ensifer meliloti).